Consider the following 434-residue polypeptide: Alpha-enolase (434 aa).

Ser-40 contacts Mg(2+). Substrate is bound by residues His-158 and Glu-167. The Proton donor role is filled by Glu-210. Mg(2+)-binding residues include Asp-245, Glu-293, and Asp-318. Substrate-binding residues include Glu-293 and Asp-318. The active-site Proton acceptor is the Lys-343. Residues 370 to 373 (SHRS) and Lys-394 each bind substrate.

This sequence belongs to the enolase family. Homodimer. The cofactor is Mg(2+).

The protein localises to the cytoplasm. It catalyses the reaction (2R)-2-phosphoglycerate = phosphoenolpyruvate + H2O. Its pathway is carbohydrate degradation; glycolysis; pyruvate from D-glyceraldehyde 3-phosphate: step 4/5. The chain is Alpha-enolase (eno1) from Xenopus laevis (African clawed frog).